A 161-amino-acid polypeptide reads, in one-letter code: UPF0225 protein NTHI0386 (161 aa).

This sequence belongs to the UPF0225 family.

The sequence is that of UPF0225 protein NTHI0386 from Haemophilus influenzae (strain 86-028NP).